The following is a 156-amino-acid chain: Cyclic pyranopterin monophosphate synthase (156 aa).

Substrate is bound by residues 73–75 (LCH) and 110–111 (ME). Aspartate 125 is a catalytic residue.

It belongs to the MoaC family. As to quaternary structure, homohexamer; trimer of dimers.

It catalyses the reaction (8S)-3',8-cyclo-7,8-dihydroguanosine 5'-triphosphate = cyclic pyranopterin phosphate + diphosphate. It participates in cofactor biosynthesis; molybdopterin biosynthesis. Functionally, catalyzes the conversion of (8S)-3',8-cyclo-7,8-dihydroguanosine 5'-triphosphate to cyclic pyranopterin monophosphate (cPMP). This Pseudomonas putida (strain W619) protein is Cyclic pyranopterin monophosphate synthase.